The primary structure comprises 394 residues: S-adenosylmethionine synthase (394 aa).

Histidine 16 is a binding site for ATP. Mg(2+) is bound at residue aspartate 18. Glutamate 44 is a binding site for K(+). L-methionine is bound by residues glutamate 57 and glutamine 100. Residues 100-110 (QSPDIAQGVDA) are flexible loop. ATP-binding positions include 172–174 (DAK), 239–240 (RF), aspartate 248, 254–255 (RK), alanine 271, and lysine 275. Residue aspartate 248 participates in L-methionine binding. Lysine 279 provides a ligand contact to L-methionine.

Belongs to the AdoMet synthase family. Homotetramer; dimer of dimers. Mg(2+) is required as a cofactor. The cofactor is K(+).

Its subcellular location is the cytoplasm. The catalysed reaction is L-methionine + ATP + H2O = S-adenosyl-L-methionine + phosphate + diphosphate. It participates in amino-acid biosynthesis; S-adenosyl-L-methionine biosynthesis; S-adenosyl-L-methionine from L-methionine: step 1/1. Its function is as follows. Catalyzes the formation of S-adenosylmethionine (AdoMet) from methionine and ATP. The overall synthetic reaction is composed of two sequential steps, AdoMet formation and the subsequent tripolyphosphate hydrolysis which occurs prior to release of AdoMet from the enzyme. This chain is S-adenosylmethionine synthase, found in Enterococcus faecalis (strain ATCC 700802 / V583).